A 375-amino-acid polypeptide reads, in one-letter code: Succinyl-diaminopimelate desuccinylase (375 aa).

His-75 contacts Zn(2+). Residue Asp-77 is part of the active site. Position 106 (Asp-106) interacts with Zn(2+). The active-site Proton acceptor is the Glu-136. The Zn(2+) site is built by Glu-137, Glu-165, and His-348.

The protein belongs to the peptidase M20A family. DapE subfamily. Homodimer. Requires Zn(2+) as cofactor. Co(2+) is required as a cofactor.

The enzyme catalyses N-succinyl-(2S,6S)-2,6-diaminopimelate + H2O = (2S,6S)-2,6-diaminopimelate + succinate. Its pathway is amino-acid biosynthesis; L-lysine biosynthesis via DAP pathway; LL-2,6-diaminopimelate from (S)-tetrahydrodipicolinate (succinylase route): step 3/3. In terms of biological role, catalyzes the hydrolysis of N-succinyl-L,L-diaminopimelic acid (SDAP), forming succinate and LL-2,6-diaminopimelate (DAP), an intermediate involved in the bacterial biosynthesis of lysine and meso-diaminopimelic acid, an essential component of bacterial cell walls. This Novosphingobium aromaticivorans (strain ATCC 700278 / DSM 12444 / CCUG 56034 / CIP 105152 / NBRC 16084 / F199) protein is Succinyl-diaminopimelate desuccinylase.